We begin with the raw amino-acid sequence, 506 residues long: Anaerobic nitric oxide reductase transcription regulator NorR (506 aa).

Residue aspartate 57 is modified to 4-aspartylphosphate. In terms of domain architecture, Sigma-54 factor interaction spans 187–416 (MIGLSPAMTQ…LEHAIHRAVV (230 aa)). ATP is bound by residues 215-222 (GETGTGKE) and 278-287 (ADNGTLFLDE). The segment at residues 481-500 (WAASARALETDVANLHRLAK) is a DNA-binding region (H-T-H motif).

The protein operates within nitrogen metabolism; nitric oxide reduction. Required for the expression of anaerobic nitric oxide (NO) reductase, acts as a transcriptional activator for at least the norVW operon. Activation also requires sigma-54. This is Anaerobic nitric oxide reductase transcription regulator NorR from Salmonella schwarzengrund (strain CVM19633).